Reading from the N-terminus, the 325-residue chain is Mitochondrial amidoxime-reducing component 1 (325 aa).

Over 1–16 (MDLKEAFATIFDQNRK) the chain is Mitochondrial matrix. Residues 17-36 (VALYAAGTTVAVLGLGLVFK) traverse the membrane as a helical; Signal-anchor for type II membrane protein segment. At 37–325 (YMRREEKLTR…VGEPVYKITY (289 aa)) the chain is on the cytoplasmic side. The Mo-molybdopterin site is built by Lys59, Ser60, and Arg84. The MOSC N-terminal region stretch occupies residues 85 to 175 (HWLVITEDGH…ADKPVRLVHY (91 aa)). In terms of domain architecture, MOSC spans 179–323 (LKPQRPHEKE…LHVGEPVYKI (145 aa)). Residues Arg230, Arg264, Cys265, and Tyr305 each coordinate Mo-molybdopterin.

Mo-molybdopterin is required as a cofactor.

It localises to the mitochondrion outer membrane. Its subcellular location is the membrane. It carries out the reaction N(omega)-hydroxy-L-arginine + 2 Fe(II)-[cytochrome b5] + 2 H(+) = L-arginine + 2 Fe(III)-[cytochrome b5] + H2O. Catalyzes the reduction of N-oxygenated molecules, acting as a counterpart of cytochrome P450 and flavin-containing monooxygenases in metabolic cycles. As a component of prodrug-converting system, reduces a multitude of N-hydroxylated prodrugs particularly amidoximes, leading to increased drug bioavailability. May be involved in mitochondrial N(omega)-hydroxy-L-arginine (NOHA) reduction, regulating endogenous nitric oxide levels and biosynthesis. Postulated to cleave the N-OH bond of N-hydroxylated substrates in concert with electron transfer from NADH to cytochrome b5 reductase then to cytochrome b5, the ultimate electron donor that primes the active site for substrate reduction. The chain is Mitochondrial amidoxime-reducing component 1 (mtarc1) from Danio rerio (Zebrafish).